The chain runs to 178 residues: Large ribosomal subunit protein eL20 (178 aa).

It belongs to the eukaryotic ribosomal protein eL20 family.

The protein is Large ribosomal subunit protein eL20 (RPL18A) of Oryza sativa subsp. japonica (Rice).